A 444-amino-acid chain; its full sequence is MSERKYFGTDGVRAVAGEFPLTAGWVLNLGAAAGEVLKRRGERPSVVIGKDTRQSGDMLEAALAAGLTSRGVTVIHVGVLPTPGVSYLTRHLGADAGVVISASHNPYADNGIKFFGADGQKLTDATELAIEAAIDEVPNFAPVTGAALGSVTNYTEAERLYIQFLREHAPDLSGLKVAMDCANGAAYRVGPKVFQAAGADVFAVYTTPDGHNINRGCGSTHLEHLQRIVREGDYDLGVAFDGDADRALFVDSRGNVVHGDHMLLLNARARRDRAVVTTIMANMALEVKLREAGIPLERTAVGDRYVHERLHEQGLTLGGEQSGHVLFLDVAPTGDGVLTALLTLSAMKRLGTTLDELHDELVMFPQTLVNVRVGNKKAIARDEVVRAAVQEAEARLRGRGRVNLRPSGTENLIRVMVEGPDEAEIHEIARTLAGVVEKRGRVEV.

The Phosphoserine intermediate role is filled by Ser103. Mg(2+) is bound by residues Ser103, Asp241, Asp243, and Asp245. Ser103 carries the phosphoserine modification.

The protein belongs to the phosphohexose mutase family. Mg(2+) is required as a cofactor. Post-translationally, activated by phosphorylation.

It carries out the reaction alpha-D-glucosamine 1-phosphate = D-glucosamine 6-phosphate. In terms of biological role, catalyzes the conversion of glucosamine-6-phosphate to glucosamine-1-phosphate. This Deinococcus geothermalis (strain DSM 11300 / CIP 105573 / AG-3a) protein is Phosphoglucosamine mutase.